Consider the following 200-residue polypeptide: Ciliary neurotrophic factor (200 aa).

Belongs to the CNTF family. In terms of assembly, homodimer. As to expression, nervous system.

It is found in the cytoplasm. Functionally, CNTF is a survival factor for various neuronal cell types. Seems to prevent the degeneration of motor axons after axotomy. The chain is Ciliary neurotrophic factor (CNTF) from Homo sapiens (Human).